We begin with the raw amino-acid sequence, 266 residues long: MLAKRIIPCLDVTGGRVVKGVNFVELRDAGDPVEIAARYNAQGADELTFLDITATSDGRDLILPIIESVASQVFIPLTVGGGVRTVEDVRRLLNAGADKTSFNSAAIANPEVINAASDKYGAQCIVVAIDAKRRTAEDEQRMGADGRAAGPGWDVYSHGGRKNTGLDAVQWAAEMARRGAGEILLTSMDRDGTKSGFDLKLTRAVSDAVPVPVIASGGVGSLDDLADGVTLGGADAVLAASIFHYGEFTVGQAKQRMAERGVPVRL.

Catalysis depends on residues aspartate 11 and aspartate 130.

Belongs to the HisA/HisF family. As to quaternary structure, heterodimer of HisH and HisF.

Its subcellular location is the cytoplasm. The catalysed reaction is 5-[(5-phospho-1-deoxy-D-ribulos-1-ylimino)methylamino]-1-(5-phospho-beta-D-ribosyl)imidazole-4-carboxamide + L-glutamine = D-erythro-1-(imidazol-4-yl)glycerol 3-phosphate + 5-amino-1-(5-phospho-beta-D-ribosyl)imidazole-4-carboxamide + L-glutamate + H(+). It participates in amino-acid biosynthesis; L-histidine biosynthesis; L-histidine from 5-phospho-alpha-D-ribose 1-diphosphate: step 5/9. Functionally, IGPS catalyzes the conversion of PRFAR and glutamine to IGP, AICAR and glutamate. The HisF subunit catalyzes the cyclization activity that produces IGP and AICAR from PRFAR using the ammonia provided by the HisH subunit. In Delftia acidovorans (strain DSM 14801 / SPH-1), this protein is Imidazole glycerol phosphate synthase subunit HisF.